The following is a 332-amino-acid chain: Ribosomal RNA small subunit methyltransferase H (332 aa).

S-adenosyl-L-methionine contacts are provided by residues G39–Y41, D56, F83, D100, and Q107.

It belongs to the methyltransferase superfamily. RsmH family.

It localises to the cytoplasm. It carries out the reaction cytidine(1402) in 16S rRNA + S-adenosyl-L-methionine = N(4)-methylcytidine(1402) in 16S rRNA + S-adenosyl-L-homocysteine + H(+). Its function is as follows. Specifically methylates the N4 position of cytidine in position 1402 (C1402) of 16S rRNA. In Bartonella tribocorum (strain CIP 105476 / IBS 506), this protein is Ribosomal RNA small subunit methyltransferase H.